A 282-amino-acid chain; its full sequence is Elongation factor Ts (282 aa).

Residues 79-82 (TDFV) form an involved in Mg(2+) ion dislocation from EF-Tu region.

The protein belongs to the EF-Ts family.

It is found in the cytoplasm. Functionally, associates with the EF-Tu.GDP complex and induces the exchange of GDP to GTP. It remains bound to the aminoacyl-tRNA.EF-Tu.GTP complex up to the GTP hydrolysis stage on the ribosome. The sequence is that of Elongation factor Ts from Shewanella loihica (strain ATCC BAA-1088 / PV-4).